We begin with the raw amino-acid sequence, 457 residues long: PDZ and LIM domain protein 7 (457 aa).

A PDZ domain is found at 1–85 (MDSFKVVLEG…RLSLGLSRAQ (85 aa)). Residue Ser-78 is modified to Phosphoserine. Disordered regions lie at residues 81–132 (LSRA…LSQN) and 186–226 (FMKK…PWAV). Thr-96 is modified (phosphothreonine). Residue Arg-103 is modified to Asymmetric dimethylarginine. Ser-111 is subject to Phosphoserine. The residue at position 247 (Ser-247) is a Phosphoserine. LIM zinc-binding domains lie at 280-338 (PVCH…VRYA), 339-398 (PSCA…MFGT), and 399-457 (KCRG…FSHV).

As to quaternary structure, binds via its LIM zinc-binding 3 domain (LIM 3) domain to endocytic codes of INSR, but not with those of IGF1R, LDLR, TFRC, or EGFR. Interacts with various PKC isoforms through the LIM zinc-binding domains. Binds to RET in a phosphorylation-independent manner via its LIM zinc-binding 2 domain (LIM 2). Probably part of a complex with SHC and the RET dimer. Interacts with TPM2, TBX4 and TBX5. Interacts (via LIM domains) with SIPA1L1. In terms of tissue distribution, expressed in kidney, heart, brain, lung, and skeletal muscle. Overexpression results in the synthesis of an unidentified soluble factor which acts on cells in the osteoblast lineage causing them to differentiate and secrete BMP-2.

It localises to the cytoplasm. The protein localises to the cytoskeleton. In terms of biological role, may function as a scaffold on which the coordinated assembly of proteins can occur. May play a role as an adapter that, via its PDZ domain, localizes LIM-binding proteins to actin filaments of both skeletal muscle and nonmuscle tissues. Involved in both of the two fundamental mechanisms of bone formation, direct bone formation (e.g. embryonic flat bones mandible and cranium), and endochondral bone formation (e.g. embryonic long bone development). Plays a role during fracture repair. Involved in BMP6 signaling pathway. This chain is PDZ and LIM domain protein 7 (Pdlim7), found in Rattus norvegicus (Rat).